A 69-amino-acid polypeptide reads, in one-letter code: Amphipathic peptide OcyC2 (69 aa).

Positions 1-23 are cleaved as a signal peptide; sequence MKTQFAILMIAVVLMQMLVQTEG. Ile-37 carries the isoleucine amide modification. The propeptide occupies 41–69; it reads GLKKLDQLDDTFDSDLSDADVKLLREMFK.

This sequence belongs to the non-disulfide-bridged peptide (NDBP) superfamily. Short antimicrobial peptide (group 4) family. In terms of tissue distribution, expressed by the venom gland.

It is found in the secreted. The protein resides in the target cell membrane. Functionally, amphipathic peptide with antimicrobial activity. Shows antifungal activity with MIC values ranging from 25 to 200 uM. Does not show antifungal activity against Candida glabrata (ATCC90030) and Candida parapsilosis (ATCC22019) (MIC&gt;400 uM). The chain is Amphipathic peptide OcyC2 from Opisthacanthus cayaporum (South American scorpion).